Here is a 727-residue protein sequence, read N- to C-terminus: Elongation factor 2 (727 aa).

Residues 19 to 260 (DQIRNMGICA…MSIKHLPNPL (242 aa)) enclose the tr-type G domain. Residues 28 to 35 (AHIDHGKT), 94 to 98 (DTPGH), and 148 to 151 (NKVD) each bind GTP. At H603 the chain carries Diphthamide.

It belongs to the TRAFAC class translation factor GTPase superfamily. Classic translation factor GTPase family. EF-G/EF-2 subfamily.

It is found in the cytoplasm. In terms of biological role, catalyzes the GTP-dependent ribosomal translocation step during translation elongation. During this step, the ribosome changes from the pre-translocational (PRE) to the post-translocational (POST) state as the newly formed A-site-bound peptidyl-tRNA and P-site-bound deacylated tRNA move to the P and E sites, respectively. Catalyzes the coordinated movement of the two tRNA molecules, the mRNA and conformational changes in the ribosome. This Methanococcus maripaludis (strain C5 / ATCC BAA-1333) protein is Elongation factor 2.